The primary structure comprises 248 residues: Kallikrein-12 (248 aa).

The signal sequence occupies residues 1-17; sequence MGLSIFLLLCVLGLSQA. Residues 22-246 enclose the Peptidase S1 domain; it reads IFNGTECGRN…YVDWIRMIMR (225 aa). An N-linked (GlcNAc...) asparagine glycan is attached at Asn24. 6 cysteine pairs are disulfide-bonded: Cys28–Cys161, Cys47–Cys63, Cys133–Cys235, Cys140–Cys206, Cys172–Cys186, and Cys196–Cys222. Residues His62 and Asp108 each act as charge relay system in the active site. A glycan (N-linked (GlcNAc...) asparagine) is linked at Asn163. The active-site Charge relay system is the Ser200.

Belongs to the peptidase S1 family. Kallikrein subfamily.

Its subcellular location is the secreted. This Homo sapiens (Human) protein is Kallikrein-12 (KLK12).